Here is a 148-residue protein sequence, read N- to C-terminus: UPF0260 protein YPK_2117 (148 aa).

The protein belongs to the UPF0260 family.

The chain is UPF0260 protein YPK_2117 from Yersinia pseudotuberculosis serotype O:3 (strain YPIII).